We begin with the raw amino-acid sequence, 150 residues long: Flagellar assembly factor FliW (150 aa).

It belongs to the FliW family. In terms of assembly, interacts with translational regulator CsrA. Interacts with flagellins FlaB1, FlaB2 and FlaB3.

The protein resides in the cytoplasm. Functionally, acts as an anti-CsrA protein, binds CsrA and prevents it from repressing translation of its target genes, one of which is flagellin. Binds to flagellin and participates in the assembly of the flagellum. Binds to the C-terminal region of flagellin, which is implicated in polymerization, and participates in the assembly of the flagellum. The protein is Flagellar assembly factor FliW of Treponema pallidum (strain Nichols).